Consider the following 188-residue polypeptide: uncharacterized protein (188 aa).

The N-terminal stretch at 1 to 23 (MVRPKLAFYILPLLLAFLGSALG) is a signal peptide. N-linked (GlcNAc...) asparagine glycosylation occurs at Asn-74.

This is an uncharacterized protein from Mus musculus (Mouse).